Consider the following 459-residue polypeptide: Vasoactive intestinal polypeptide receptor 1 (459 aa).

A signal peptide spans methionine 1–alanine 30. The Extracellular portion of the chain corresponds to alanine 31 to threonine 142. Cystine bridges form between cysteine 37–cysteine 209, cysteine 50–cysteine 72, cysteine 63–cysteine 105, cysteine 86–cysteine 122, and cysteine 216–cysteine 286. 3 N-linked (GlcNAc...) asparagine glycosylation sites follow: asparagine 58, asparagine 69, and asparagine 100. Residues valine 143–leucine 167 traverse the membrane as a helical segment. Residues phenylalanine 168–arginine 175 are Cytoplasmic-facing. Residues asparagine 176 to aspartate 197 form a helical membrane-spanning segment. Residues methionine 198–lysine 217 lie on the Extracellular side of the membrane. Residues alanine 218 to tyrosine 242 form a helical membrane-spanning segment. Residues threonine 243 to tyrosine 255 are Cytoplasmic-facing. Residues phenylalanine 256–valine 277 traverse the membrane as a helical segment. Residues arginine 278–serine 293 are Extracellular-facing. Asparagine 292 is a glycosylation site (N-linked (GlcNAc...) asparagine). Residues serine 294 to isoleucine 318 traverse the membrane as a helical segment. Topologically, residues arginine 319–arginine 340 are cytoplasmic. Residues leucine 341–phenylalanine 361 form a helical membrane-spanning segment. At phenylalanine 362–glutamine 369 the chain is on the extracellular side. The chain crosses the membrane as a helical span at residues valine 370 to leucine 393. Residues asparagine 394–valine 459 lie on the Cytoplasmic side of the membrane.

This sequence belongs to the G-protein coupled receptor 2 family. In terms of assembly, interacts with ADCYAP1/PACAP; activated by both PACAP27 and PACAP38 neuropeptides. Interacts with VIP; the interaction results in VIPR1 activation. As to expression, in liver, lung, intestines, thymus and brain (mostly in the cerebral cortex and hippocampus).

The protein resides in the cell membrane. Its function is as follows. G protein-coupled receptor activated by the neuropeptides vasoactive intestinal peptide (VIP) and pituitary adenylate cyclase-activating polypeptide (ADCYAP1/PACAP). Binds VIP and both PACAP27 and PACAP38 bioactive peptides with the following order of ligand affinity VIP = PACAP27 &gt; PACAP38. Ligand binding causes a conformation change that triggers signaling via guanine nucleotide-binding proteins (G proteins) and modulates the activity of downstream effectors. Activates cAMP-dependent pathway. In Rattus norvegicus (Rat), this protein is Vasoactive intestinal polypeptide receptor 1.